We begin with the raw amino-acid sequence, 206 residues long: Probable nicotinate-nucleotide adenylyltransferase (206 aa).

The protein belongs to the NadD family.

It catalyses the reaction nicotinate beta-D-ribonucleotide + ATP + H(+) = deamido-NAD(+) + diphosphate. It functions in the pathway cofactor biosynthesis; NAD(+) biosynthesis; deamido-NAD(+) from nicotinate D-ribonucleotide: step 1/1. In terms of biological role, catalyzes the reversible adenylation of nicotinate mononucleotide (NaMN) to nicotinic acid adenine dinucleotide (NaAD). The sequence is that of Probable nicotinate-nucleotide adenylyltransferase from Gloeobacter violaceus (strain ATCC 29082 / PCC 7421).